The following is a 608-amino-acid chain: UvrABC system protein C (608 aa).

The GIY-YIG domain maps to 16-94 (NRPGVYRMFD…IKEWRPPYNI (79 aa)). The 36-residue stretch at 204-239 (NALADELNVGMEQAAMRLDFEKAAELRDQVAILRRV) folds into the UVR domain.

The protein belongs to the UvrC family. In terms of assembly, interacts with UvrB in an incision complex.

The protein localises to the cytoplasm. The UvrABC repair system catalyzes the recognition and processing of DNA lesions. UvrC both incises the 5' and 3' sides of the lesion. The N-terminal half is responsible for the 3' incision and the C-terminal half is responsible for the 5' incision. The sequence is that of UvrABC system protein C from Pseudomonas aeruginosa (strain LESB58).